A 463-amino-acid chain; its full sequence is Ribulose bisphosphate carboxylase (463 aa).

Asn-116 provides a ligand contact to substrate. Catalysis depends on Lys-171, which acts as the Proton acceptor. Lys-173 lines the substrate pocket. Mg(2+)-binding residues include Lys-196, Asp-198, and Glu-199. Lys-196 carries the N6-carboxylysine modification. His-294 (proton acceptor) is an active-site residue. Positions 295, 328, and 375 each coordinate substrate.

It belongs to the RuBisCO large chain family. Type II subfamily. Homodimer. It depends on Mg(2+) as a cofactor.

The enzyme catalyses 2 (2R)-3-phosphoglycerate + 2 H(+) = D-ribulose 1,5-bisphosphate + CO2 + H2O. It catalyses the reaction D-ribulose 1,5-bisphosphate + O2 = 2-phosphoglycolate + (2R)-3-phosphoglycerate + 2 H(+). RuBisCO catalyzes two reactions: the carboxylation of D-ribulose 1,5-bisphosphate, the primary event in carbon dioxide fixation, as well as the oxidative fragmentation of the pentose substrate. Both reactions occur simultaneously and in competition at the same active site. The sequence is that of Ribulose bisphosphate carboxylase from Hydrogenovibrio marinus.